The chain runs to 330 residues: Methylthioribose-1-phosphate isomerase (330 aa).

Substrate-binding positions include 49–51, Arg83, and Gln179; that span reads RGA. Asp220 (proton donor) is an active-site residue. 230 to 231 contributes to the substrate binding site; that stretch reads NK.

The protein belongs to the eIF-2B alpha/beta/delta subunits family. MtnA subfamily.

The catalysed reaction is 5-(methylsulfanyl)-alpha-D-ribose 1-phosphate = 5-(methylsulfanyl)-D-ribulose 1-phosphate. It functions in the pathway amino-acid biosynthesis; L-methionine biosynthesis via salvage pathway; L-methionine from S-methyl-5-thio-alpha-D-ribose 1-phosphate: step 1/6. Functionally, catalyzes the interconversion of methylthioribose-1-phosphate (MTR-1-P) into methylthioribulose-1-phosphate (MTRu-1-P). The polypeptide is Methylthioribose-1-phosphate isomerase (Thermus thermophilus (strain ATCC 27634 / DSM 579 / HB8)).